A 250-amino-acid polypeptide reads, in one-letter code: HLA class II histocompatibility antigen, DO alpha chain (250 aa).

The N-terminal stretch at 1-25 (MALRAGLVLGFHTLMTLLSPQEAGA) is a signal peptide. Positions 26–110 (TKADHMGSYG…ERSNRSRAIN (85 aa)) are alpha-1. Topologically, residues 26–217 (TKADHMGSYG…VPIPPPDAME (192 aa)) are extracellular. N-linked (GlcNAc...) asparagine glycosylation is found at Asn104 and Asn144. Positions 111–204 (VPPRVTVLPK…GLDAPLLRHW (94 aa)) are alpha-2. The Ig-like C1-type domain occupies 113–205 (PRVTVLPKSR…LDAPLLRHWE (93 aa)). Cys133 and Cys189 are disulfide-bonded. The segment at 205–217 (ELQVPIPPPDAME) is connecting peptide. Residues 218–240 (TLVCALGLAIGLVGFLVGTVLII) traverse the membrane as a helical segment. Residues 241 to 250 (MGTYVSSVPR) lie on the Cytoplasmic side of the membrane.

Belongs to the MHC class II family. As to quaternary structure, heterodimer of an alpha chain (DOA) and a beta chain (DOB). Forms a heterotetrameric complex with an HLA-DM molecule during intracellular transport in endosomal/lysosomal compartments in B-cells.

The protein localises to the endosome membrane. It is found in the lysosome membrane. Functionally, important modulator in the HLA class II restricted antigen presentation pathway by interaction with the HLA-DM molecule in B-cells. Modifies peptide exchange activity of HLA-DM. This chain is HLA class II histocompatibility antigen, DO alpha chain (HLA-DOA), found in Homo sapiens (Human).